Consider the following 227-residue polypeptide: Ion-translocating oxidoreductase complex subunit E (227 aa).

Transmembrane regions (helical) follow at residues 57 to 77 (LGLG…ISLF), 89 to 109 (IYVM…NAFA), 111 to 131 (PVYQ…IVIG), 146 to 166 (AFDG…LGAI), and 200 to 220 (GLLL…ILAV).

This sequence belongs to the NqrDE/RnfAE family. In terms of assembly, the complex is composed of six subunits: RnfA, RnfB, RnfC, RnfD, RnfE and RnfG.

It localises to the cell inner membrane. Its function is as follows. Part of a membrane-bound complex that couples electron transfer with translocation of ions across the membrane. The chain is Ion-translocating oxidoreductase complex subunit E from Haemophilus ducreyi (strain 35000HP / ATCC 700724).